An 87-amino-acid chain; its full sequence is Mitochondrial import inner membrane translocase subunit TIM9 (87 aa).

Positions 35-59 (CFSDCVNDFTSAKLTSKEQNCIMRC) match the Twin CX3C motif motif. Disulfide bonds link Cys-35-Cys-59 and Cys-39-Cys-55.

Belongs to the small Tim family. Heterohexamer; composed of 3 copies of TIM9 and 3 copies of TIM10, named soluble 70 kDa complex. Associates with the TIM22 complex, whose core is composed of TIM22 and TIM54. Interacts with the transmembrane regions of multi-pass transmembrane proteins in transit.

It is found in the mitochondrion inner membrane. Functionally, mitochondrial intermembrane chaperone that participates in the import and insertion of multi-pass transmembrane proteins into the mitochondrial inner membrane. Also required for the transfer of beta-barrel precursors from the TOM complex to the sorting and assembly machinery (SAM complex) of the outer membrane. Acts as a chaperone-like protein that protects the hydrophobic precursors from aggregation and guide them through the mitochondrial intermembrane space. In Kluyveromyces lactis (strain ATCC 8585 / CBS 2359 / DSM 70799 / NBRC 1267 / NRRL Y-1140 / WM37) (Yeast), this protein is Mitochondrial import inner membrane translocase subunit TIM9 (TIM9).